The primary structure comprises 467 residues: ATP synthase subunit beta (467 aa).

152–159 (GGAGVGKT) provides a ligand contact to ATP.

The protein belongs to the ATPase alpha/beta chains family. F-type ATPases have 2 components, CF(1) - the catalytic core - and CF(0) - the membrane proton channel. CF(1) has five subunits: alpha(3), beta(3), gamma(1), delta(1), epsilon(1). CF(0) has three main subunits: a(1), b(2) and c(9-12). The alpha and beta chains form an alternating ring which encloses part of the gamma chain. CF(1) is attached to CF(0) by a central stalk formed by the gamma and epsilon chains, while a peripheral stalk is formed by the delta and b chains.

The protein resides in the cell membrane. The enzyme catalyses ATP + H2O + 4 H(+)(in) = ADP + phosphate + 5 H(+)(out). Functionally, produces ATP from ADP in the presence of a proton gradient across the membrane. The catalytic sites are hosted primarily by the beta subunits. This is ATP synthase subunit beta from Caldicellulosiruptor bescii (strain ATCC BAA-1888 / DSM 6725 / KCTC 15123 / Z-1320) (Anaerocellum thermophilum).